The primary structure comprises 226 residues: Ribose-5-phosphate isomerase A (226 aa).

Residues 28-31, 83-86, and 97-100 contribute to the substrate site; these read TGST, DGAD, and KGGG. Glu106 acts as the Proton acceptor in catalysis. Position 124 (Lys124) interacts with substrate.

The protein belongs to the ribose 5-phosphate isomerase family. Homotetramer.

The catalysed reaction is aldehydo-D-ribose 5-phosphate = D-ribulose 5-phosphate. The protein operates within carbohydrate biosynthesis; D-ribose 5-phosphate biosynthesis. Functionally, catalyzes the reversible conversion of ribose-5-phosphate to ribulose 5-phosphate. The chain is Ribose-5-phosphate isomerase A from Methanocaldococcus jannaschii (strain ATCC 43067 / DSM 2661 / JAL-1 / JCM 10045 / NBRC 100440) (Methanococcus jannaschii).